Consider the following 104-residue polypeptide: Phosphate metabolism protein 6 (104 aa).

A helical membrane pass occupies residues 76–96 (IIVIIIVLLLYSLTMVGLFYV).

Its subcellular location is the vacuole membrane. This Saccharomyces cerevisiae (strain ATCC 204508 / S288c) (Baker's yeast) protein is Phosphate metabolism protein 6 (PHM6).